A 95-amino-acid polypeptide reads, in one-letter code: Cell division topological specificity factor (95 aa).

The protein belongs to the MinE family.

Functionally, prevents the cell division inhibition by proteins MinC and MinD at internal division sites while permitting inhibition at polar sites. This ensures cell division at the proper site by restricting the formation of a division septum at the midpoint of the long axis of the cell. The protein is Cell division topological specificity factor of Microcystis aeruginosa (strain NIES-843 / IAM M-2473).